A 197-amino-acid chain; its full sequence is ATP-dependent Clp protease proteolytic subunit (197 aa).

The active-site Nucleophile is the Ser-98. Residue His-123 is part of the active site.

It belongs to the peptidase S14 family. Fourteen ClpP subunits assemble into 2 heptameric rings which stack back to back to give a disk-like structure with a central cavity, resembling the structure of eukaryotic proteasomes.

It localises to the cytoplasm. The catalysed reaction is Hydrolysis of proteins to small peptides in the presence of ATP and magnesium. alpha-casein is the usual test substrate. In the absence of ATP, only oligopeptides shorter than five residues are hydrolyzed (such as succinyl-Leu-Tyr-|-NHMec, and Leu-Tyr-Leu-|-Tyr-Trp, in which cleavage of the -Tyr-|-Leu- and -Tyr-|-Trp bonds also occurs).. Functionally, cleaves peptides in various proteins in a process that requires ATP hydrolysis. Has a chymotrypsin-like activity. Plays a major role in the degradation of misfolded proteins. The chain is ATP-dependent Clp protease proteolytic subunit from Natranaerobius thermophilus (strain ATCC BAA-1301 / DSM 18059 / JW/NM-WN-LF).